Here is a 301-residue protein sequence, read N- to C-terminus: t-SNARE affecting a late Golgi compartment protein 2 (301 aa).

The Cytoplasmic segment spans residues 1 to 279; the sequence is MAYRDRTGLY…SHQKNTGRLR (279 aa). Residues 92-120 adopt a coiled-coil conformation; that stretch reads SDKTEQENEIQRLTIQITQDFQRCQKLLQ. Residues 206–268 enclose the t-SNARE coiled-coil homology domain; the sequence is DEQAIRHERA…KSAEKELIKA (63 aa). Residues 280-300 traverse the membrane as a helical; Anchor for type IV membrane protein segment; sequence FICFLILLIVALIVILAIKLL. A topological domain (vesicular) is located at residue arginine 301.

The protein belongs to the syntaxin family.

It is found in the golgi apparatus. The protein resides in the trans-Golgi network membrane. Its subcellular location is the endosome membrane. In terms of biological role, t-SNARE that functions in transport from the endosome to the late Golgi and on the endocytic pathway. The sequence is that of t-SNARE affecting a late Golgi compartment protein 2 (tlg2) from Schizosaccharomyces pombe (strain 972 / ATCC 24843) (Fission yeast).